A 92-amino-acid polypeptide reads, in one-letter code: Putative pterin-4-alpha-carbinolamine dehydratase (92 aa).

Belongs to the pterin-4-alpha-carbinolamine dehydratase family.

The enzyme catalyses (4aS,6R)-4a-hydroxy-L-erythro-5,6,7,8-tetrahydrobiopterin = (6R)-L-erythro-6,7-dihydrobiopterin + H2O. The sequence is that of Putative pterin-4-alpha-carbinolamine dehydratase from Haloarcula marismortui (strain ATCC 43049 / DSM 3752 / JCM 8966 / VKM B-1809) (Halobacterium marismortui).